Reading from the N-terminus, the 291-residue chain is BTB/POZ domain-containing protein 19 (291 aa).

In terms of domain architecture, BTB spans 29-98 (SDVRFVVGQE…LYTNSAKLQR (70 aa)). A BACK domain is found at 134-234 (CEALQVAVTF…LALLAPAELS (101 aa)).

The polypeptide is BTB/POZ domain-containing protein 19 (BTBD19) (Bos taurus (Bovine)).